Reading from the N-terminus, the 63-residue chain is Cecropin-C (63 aa).

A signal peptide spans 1 to 23 (MNFNKIFVFVALILAISLGQSEA). An Arginine amide modification is found at arginine 62.

It belongs to the cecropin family.

It is found in the secreted. Cecropins have lytic and antibacterial activity against several Gram-positive and Gram-negative bacteria. The chain is Cecropin-C (CecC) from Drosophila orena (Fruit fly).